The chain runs to 999 residues: Ulvan lyase, long isoform (999 aa).

A signal peptide spans 1–21; that stretch reads MKCLKTLLVSTTLLGAFSLNA. 126–127 contacts substrate; sequence SH. His127 acts as the Proton donor/acceptor in catalysis. Ca(2+) is bound by residues Asp189, Asp199, and Lys201. Positions 280 and 297 each coordinate substrate. Residues Asp300, Asp303, and Tyr305 each coordinate Ca(2+). Substrate is bound at residue Tyr361.

The protein belongs to the polysaccharide lyase 24 family.

Its function is as follows. Ulvan lyase involved in ulvan degradation. Ulvan is the main polysaccharide component of the Ulvales (green seaweed) cell wall. It is composed of disaccharide building blocks comprising 3-sulfated rhamnose (Rha3S) linked to D-glucuronic acid (GlcA), L-iduronic acid (IduA), or D-xylose (Xyl). Ulvan lyase catalyzes preferentially the endolytic cleavage of the glycosidic bond between Rha3S and the uronic acid GlcA, but not IduA, producing oligosaccharides that have unsaturated 4-deoxy-L-threo-hex-4-enopyranosiduronic acid (deltaUA) at the non-reducing end. The most abundant end products in the degradation of the ulvan polysaccharide were deltaUA-Rha3S disaccharides and deltaUA-Rha3S-IduA-Rha3S and deltaUA-Rha3S-Xyl-Rha3S tetrasaccharides. The polypeptide is Ulvan lyase, long isoform (Alteromonas sp).